The chain runs to 142 residues: Hemoglobin cathodic subunit alpha (142 aa).

An N-acetylserine modification is found at serine 1. Positions 1–142 (SLTAKDKALV…LSSTAADKYR (142 aa)) constitute a Globin domain. Residue histidine 59 coordinates O2. Heme b is bound at residue histidine 88.

This sequence belongs to the globin family. In terms of assembly, heterotetramer of two alpha chains and two beta chains.

Involved in oxygen transport from gills to the various peripheral tissues. The sequence is that of Hemoglobin cathodic subunit alpha from Hoplosternum littorale (Hassar).